Reading from the N-terminus, the 240-residue chain is tRNA (guanine-N(1)-)-methyltransferase (240 aa).

S-adenosyl-L-methionine contacts are provided by residues glycine 108 and 127-132 (IGDYVL).

It belongs to the RNA methyltransferase TrmD family. In terms of assembly, homodimer.

Its subcellular location is the cytoplasm. It carries out the reaction guanosine(37) in tRNA + S-adenosyl-L-methionine = N(1)-methylguanosine(37) in tRNA + S-adenosyl-L-homocysteine + H(+). In terms of biological role, specifically methylates guanosine-37 in various tRNAs. In Lactobacillus johnsonii (strain CNCM I-12250 / La1 / NCC 533), this protein is tRNA (guanine-N(1)-)-methyltransferase.